Consider the following 149-residue polypeptide: Deoxyuridine 5'-triphosphate nucleotidohydrolase (149 aa).

Residues 68–70 (RSG), N81, and 85–87 (LID) each bind substrate.

The protein belongs to the dUTPase family. The cofactor is Mg(2+).

It catalyses the reaction dUTP + H2O = dUMP + diphosphate + H(+). The protein operates within pyrimidine metabolism; dUMP biosynthesis; dUMP from dCTP (dUTP route): step 2/2. In terms of biological role, this enzyme is involved in nucleotide metabolism: it produces dUMP, the immediate precursor of thymidine nucleotides and it decreases the intracellular concentration of dUTP so that uracil cannot be incorporated into DNA. The sequence is that of Deoxyuridine 5'-triphosphate nucleotidohydrolase from Aromatoleum aromaticum (strain DSM 19018 / LMG 30748 / EbN1) (Azoarcus sp. (strain EbN1)).